The following is a 161-amino-acid chain: 2-C-methyl-D-erythritol 2,4-cyclodiphosphate synthase (161 aa).

2 residues coordinate a divalent metal cation: aspartate 11 and histidine 13. 4-CDP-2-C-methyl-D-erythritol 2-phosphate-binding positions include 11 to 13 (DIH) and 37 to 38 (HS). Histidine 45 contributes to the a divalent metal cation binding site. 4-CDP-2-C-methyl-D-erythritol 2-phosphate-binding positions include 59-61 (DIG), 135-138 (TTNE), and arginine 145.

Belongs to the IspF family. In terms of assembly, homotrimer. The cofactor is a divalent metal cation.

The enzyme catalyses 4-CDP-2-C-methyl-D-erythritol 2-phosphate = 2-C-methyl-D-erythritol 2,4-cyclic diphosphate + CMP. Its pathway is isoprenoid biosynthesis; isopentenyl diphosphate biosynthesis via DXP pathway; isopentenyl diphosphate from 1-deoxy-D-xylulose 5-phosphate: step 4/6. In terms of biological role, involved in the biosynthesis of isopentenyl diphosphate (IPP) and dimethylallyl diphosphate (DMAPP), two major building blocks of isoprenoid compounds. Catalyzes the conversion of 4-diphosphocytidyl-2-C-methyl-D-erythritol 2-phosphate (CDP-ME2P) to 2-C-methyl-D-erythritol 2,4-cyclodiphosphate (ME-CPP) with a corresponding release of cytidine 5-monophosphate (CMP). In Thermosynechococcus vestitus (strain NIES-2133 / IAM M-273 / BP-1), this protein is 2-C-methyl-D-erythritol 2,4-cyclodiphosphate synthase.